A 116-amino-acid polypeptide reads, in one-letter code: Phosphoribosyl-AMP cyclohydrolase (116 aa).

Position 82 (aspartate 82) interacts with Mg(2+). A Zn(2+)-binding site is contributed by cysteine 83. Residues aspartate 84 and aspartate 86 each contribute to the Mg(2+) site. Positions 99 and 106 each coordinate Zn(2+).

This sequence belongs to the PRA-CH family. In terms of assembly, homodimer. Mg(2+) serves as cofactor. Zn(2+) is required as a cofactor.

It localises to the cytoplasm. It carries out the reaction 1-(5-phospho-beta-D-ribosyl)-5'-AMP + H2O = 1-(5-phospho-beta-D-ribosyl)-5-[(5-phospho-beta-D-ribosylamino)methylideneamino]imidazole-4-carboxamide. It participates in amino-acid biosynthesis; L-histidine biosynthesis; L-histidine from 5-phospho-alpha-D-ribose 1-diphosphate: step 3/9. Its function is as follows. Catalyzes the hydrolysis of the adenine ring of phosphoribosyl-AMP. The chain is Phosphoribosyl-AMP cyclohydrolase from Saccharopolyspora erythraea (strain ATCC 11635 / DSM 40517 / JCM 4748 / NBRC 13426 / NCIMB 8594 / NRRL 2338).